The chain runs to 457 residues: Allantoinase (457 aa).

Positions 58, 60, 145, 181, 237, and 310 each coordinate Zn(2+). At Lys145 the chain carries N6-carboxylysine.

Belongs to the metallo-dependent hydrolases superfamily. Allantoinase family. As to quaternary structure, homotetramer. Zn(2+) is required as a cofactor. In terms of processing, carboxylation allows a single lysine to coordinate two zinc ions.

The catalysed reaction is (S)-allantoin + H2O = allantoate + H(+). Its pathway is nitrogen metabolism; (S)-allantoin degradation; allantoate from (S)-allantoin: step 1/1. Functionally, catalyzes the conversion of allantoin (5-ureidohydantoin) to allantoic acid by hydrolytic cleavage of the five-member hydantoin ring. This chain is Allantoinase, found in Solibacter usitatus (strain Ellin6076).